We begin with the raw amino-acid sequence, 283 residues long: Diaminopimelate epimerase (283 aa).

Substrate contacts are provided by Asn-13 and Asn-66. Residue Cys-75 is the Proton donor of the active site. Residues 76 to 77, Asn-165, Asn-198, and 216 to 217 contribute to the substrate site; these read GN and ER. The active-site Proton acceptor is the Cys-225. 226–227 contributes to the substrate binding site; that stretch reads GT.

It belongs to the diaminopimelate epimerase family. Homodimer.

The protein resides in the cytoplasm. The catalysed reaction is (2S,6S)-2,6-diaminopimelate = meso-2,6-diaminopimelate. The protein operates within amino-acid biosynthesis; L-lysine biosynthesis via DAP pathway; DL-2,6-diaminopimelate from LL-2,6-diaminopimelate: step 1/1. In terms of biological role, catalyzes the stereoinversion of LL-2,6-diaminopimelate (L,L-DAP) to meso-diaminopimelate (meso-DAP), a precursor of L-lysine and an essential component of the bacterial peptidoglycan. This chain is Diaminopimelate epimerase, found in Acaryochloris marina (strain MBIC 11017).